We begin with the raw amino-acid sequence, 115 residues long: Waprin-like protein (115 aa).

A signal peptide spans 1–21 (MNRSLLAFAIVLVLLVAGTSS). The region spanning 23-69 (LFNKSGNCPMRNTVTSCTPRCIGDGECSSNQKCCPNKCGTTSCANSS) is the WAP domain. Intrachain disulfides connect C30–C56, C39–C60, C43–C55, and C49–C65.

The protein belongs to the venom waprin family. Cys-rich waprin subfamily. As to expression, expressed by the venom gland.

It localises to the secreted. Its function is as follows. Antimicrobial peptides with activity against Gram-positive and Gram-negative bacteria as well as fungi. Recognizes carbohydrates in the microbial cell walls, and induces structural damage to them. Also inhibits microbial serine proteases, as well as mammalian elastases. Carbohydrates that are recognized are LPS, mannan, peptidoglycan, and N-acetl-D-glucosamine. This Tetramorium bicarinatum (Tramp ant) protein is Waprin-like protein.